A 293-amino-acid chain; its full sequence is N(1)-aminopropylagmatine ureohydrolase (293 aa).

Histidine 105, aspartate 128, histidine 130, aspartate 132, aspartate 210, and aspartate 212 together coordinate Mn(2+).

It belongs to the arginase family. Mn(2+) is required as a cofactor.

It catalyses the reaction N(1)-(3-aminopropyl)agmatine + H2O = urea + spermidine. It participates in amine and polyamine biosynthesis; spermidine biosynthesis. Functionally, involved in the biosynthesis of polyamines which are thought to support the growth of thermophilic microorganisms under high-temperature conditions. It seems that long-chain and branched-chain of polyamines effectively stabilize DNA and RNA, respectively. Catalyzes the decarboxylation of N1-(3-aminopropyl)agmatine to yield spermidine and urea. Does not act on agmatine. In Thermus thermophilus (strain ATCC BAA-163 / DSM 7039 / HB27), this protein is N(1)-aminopropylagmatine ureohydrolase.